A 184-amino-acid polypeptide reads, in one-letter code: Adenine phosphoribosyltransferase (184 aa).

The protein belongs to the purine/pyrimidine phosphoribosyltransferase family. Homodimer.

It is found in the cytoplasm. It catalyses the reaction AMP + diphosphate = 5-phospho-alpha-D-ribose 1-diphosphate + adenine. It participates in purine metabolism; AMP biosynthesis via salvage pathway; AMP from adenine: step 1/1. Its function is as follows. Catalyzes a salvage reaction resulting in the formation of AMP, that is energically less costly than de novo synthesis. The protein is Adenine phosphoribosyltransferase of Sphingopyxis alaskensis (strain DSM 13593 / LMG 18877 / RB2256) (Sphingomonas alaskensis).